The following is a 97-amino-acid chain: Plastocyanin A/B (97 aa).

The Plastocyanin-like domain occupies 1-97 (AEVKLGSDDG…AGMKGEVTVN (97 aa)). Cu cation is bound by residues His-37, Cys-82, His-85, and Met-90.

It belongs to the plastocyanin family. Cu(2+) serves as cofactor.

The protein localises to the plastid. The protein resides in the chloroplast thylakoid membrane. Its function is as follows. Participates in electron transfer between P700 and the cytochrome b6-f complex in photosystem I. In Petroselinum crispum (Parsley), this protein is Plastocyanin A/B (PETE).